A 393-amino-acid polypeptide reads, in one-letter code: MSMLETRAERMVINLGPHHPSMHGVLRLIVTLDGENVVDCVPVLGYLHRSMEKIAESRTIIQYLPYVTRWDYLATMFTEAITVNAPEQLAGVQVPRRARYIRVIMLELSRIASHLLWLGPFMADIGATSPFFYIFREREMIYDLFEAATGMRMMHNYFRVGGVAVDLPYGWVDKARDFCNYLPPKIDEYERLITNNPIFRGRVEGLGYIGREDAINWGLSGPMLRASGVNWDLRKVDHYEIYDELDWNVAWDTGGDTLARYVVRIQEMRESVKMIRQALDQLPGGPYENLEAQRLSGGPKSEWNGFDYQFIGKKSSPTFKMPRGEHYVRVEAPKGELGVYLIGDDSTFPWRWKIRPPGFINLAVLPKLVQGTKLADLMAILGSVDIIMGEVDR.

Belongs to the complex I 49 kDa subunit family. In terms of assembly, NDH-1 can be composed of about 15 different subunits; different subcomplexes with different compositions have been identified which probably have different functions.

It localises to the cell inner membrane. It carries out the reaction a plastoquinone + NADH + (n+1) H(+)(in) = a plastoquinol + NAD(+) + n H(+)(out). It catalyses the reaction a plastoquinone + NADPH + (n+1) H(+)(in) = a plastoquinol + NADP(+) + n H(+)(out). Its function is as follows. NDH-1 shuttles electrons from an unknown electron donor, via FMN and iron-sulfur (Fe-S) centers, to quinones in the respiratory and/or the photosynthetic chain. The immediate electron acceptor for the enzyme in this species is believed to be plastoquinone. Couples the redox reaction to proton translocation, and thus conserves the redox energy in a proton gradient. Cyanobacterial NDH-1 also plays a role in inorganic carbon-concentration. This Gloeobacter violaceus (strain ATCC 29082 / PCC 7421) protein is NAD(P)H-quinone oxidoreductase subunit H 1.